The primary structure comprises 333 residues: Thiamine-monophosphate kinase (333 aa).

Positions 35, 50, and 51 each coordinate Mg(2+). Histidine 58 contributes to the substrate binding site. Aspartate 80 contacts Mg(2+). Residues tyrosine 111, 128–129, and arginine 153 each bind ATP; that span reads GD. Residue aspartate 129 coordinates Mg(2+). Residue aspartate 230 participates in Mg(2+) binding. Serine 232 contacts ATP. Position 233 (aspartate 233) interacts with Mg(2+). Substrate is bound by residues glutamate 278 and phenylalanine 330.

It belongs to the thiamine-monophosphate kinase family.

The enzyme catalyses thiamine phosphate + ATP = thiamine diphosphate + ADP. It participates in cofactor biosynthesis; thiamine diphosphate biosynthesis; thiamine diphosphate from thiamine phosphate: step 1/1. Catalyzes the ATP-dependent phosphorylation of thiamine-monophosphate (TMP) to form thiamine-pyrophosphate (TPP), the active form of vitamin B1. This chain is Thiamine-monophosphate kinase, found in Prochlorococcus marinus (strain SARG / CCMP1375 / SS120).